The chain runs to 376 residues: Thymidine kinase (376 aa).

A disordered region spans residues 1–44 (MASYPGHQHASAFDQAARSRGHSNRRTALRPRRQQEATEVRPEQ). Over residues 19-32 (SRGHSNRRTALRPR) the composition is skewed to basic residues. A compositionally biased stretch (basic and acidic residues) spans 33–44 (RQQEATEVRPEQ). 56-63 (GPHGMGKT) contributes to the ATP binding site. The active-site Proton acceptor is the Glu-83. Residues Tyr-101 and Gln-125 each coordinate substrate. Arg-216 is a binding site for ATP. Residue Arg-222 participates in substrate binding. The disordered stretch occupies residues 260-280 (GQLSGTAVPPQGAEPQSNAGP).

It belongs to the herpesviridae thymidine kinase family. In terms of assembly, homodimer.

It catalyses the reaction thymidine + ATP = dTMP + ADP + H(+). Functionally, catalyzes the transfer of the gamma-phospho group of ATP to thymidine to generate dTMP in the salvage pathway of pyrimidine synthesis. The dTMP serves as a substrate for DNA polymerase during viral DNA replication. Allows the virus to be reactivated and to grow in non-proliferative cells lacking a high concentration of phosphorylated nucleic acid precursors. The sequence is that of Thymidine kinase from Human herpesvirus 1 (strain HFEM) (HHV-1).